Here is a 341-residue protein sequence, read N- to C-terminus: Allergen Mag (341 aa).

This is Allergen Mag (MAG) from Dermatophagoides farinae (American house dust mite).